The following is a 220-amino-acid chain: MAEYLASIFGTEKDKVNCSFYFKIGACRHGDRCSRLHNKPTFSQTIVLLNLYRNPQNTAQTADGSHCHVSDVEVQEHYDNFFEEVFTELQEKYGEIEEMNVCDNLGDHLVGNVYVKFRREEDAERAVAELNNRWFNGQAVHAELSPVTDFRESCCRQYEMGECTRGGFCNFMHLRPISRNLRRQLYGRGPRHRSPPRSHTGHRPRERNRRRSPDHRHGRF.

Residue A2 is modified to N-acetylalanine. The segment at 12–40 (EKDKVNCSFYFKIGACRHGDRCSRLHNKP) adopts a C3H1-type 1 zinc-finger fold. The region spanning 65-147 (SHCHVSDVEV…QAVHAELSPV (83 aa)) is the RRM domain. Residues 149 to 176 (DFRESCCRQYEMGECTRGGFCNFMHLRP) form a C3H1-type 2 zinc finger. Residues 186-220 (YGRGPRHRSPPRSHTGHRPRERNRRRSPDHRHGRF) form a disordered region. Basic residues predominate over residues 189–220 (GPRHRSPPRSHTGHRPRERNRRRSPDHRHGRF).

It belongs to the splicing factor SR family. As to quaternary structure, interacts with GFI1, U2AF2 and C1QBP. Isoform 3 interacts with PER1. Post-translationally, isoform 3 is rapidly degraded by a proteasome-mediated degradation pathway. In terms of tissue distribution, ubiquitous. Highly expressed in the brain.

The protein localises to the nucleus. It localises to the nucleus speckle. Its subcellular location is the cytoplasm. Its function is as follows. RNA-binding protein that function as a pre-mRNA splicing factor. Plays a critical role in both constitutive and enhancer-dependent splicing by mediating protein-protein interactions and protein-RNA interactions required for accurate 3'-splice site selection. It can functionally substitute for U2AF1 in constitutive splicing and enhancer-dependent splicing. Acts by enhancing the binding of U2AF2 to weak pyrimidine tracts. Also participates in the regulation of alternative pre-mRNA splicing. Activates exon 5 skipping of PTPRC during T-cell activation; an event reversed by GFI1. Binds to RNA at the AG dinucleotide at the 3'-splice site. Shows a preference for AGC or AGA. Alternative splicing of U2AF1L4 may play a role in connecting the circadian rhythm to changing external cues: may provide a circadian buffering system in central and periphery clocks that allows synchronized adaption to clock-resetting stimuli in order to prevent potentially pathogenic desynchronization. This is Splicing factor U2AF 26 kDa subunit (U2af1l4) from Mus musculus (Mouse).